Reading from the N-terminus, the 372-residue chain is Tyrosine--tRNA ligase 1 (372 aa).

Positions 37, 169, 173, 176, and 191 each coordinate L-tyrosine. The 'KMSKS' region signature appears at 246-250 (KMSKS). Lys249 lines the ATP pocket.

The protein belongs to the class-I aminoacyl-tRNA synthetase family. TyrS type 4 subfamily. In terms of assembly, homodimer.

The protein resides in the cytoplasm. The enzyme catalyses tRNA(Tyr) + L-tyrosine + ATP = L-tyrosyl-tRNA(Tyr) + AMP + diphosphate + H(+). Its function is as follows. Catalyzes the attachment of tyrosine to tRNA(Tyr) in a two-step reaction: tyrosine is first activated by ATP to form Tyr-AMP and then transferred to the acceptor end of tRNA(Tyr). The sequence is that of Tyrosine--tRNA ligase 1 from Pyrobaculum aerophilum (strain ATCC 51768 / DSM 7523 / JCM 9630 / CIP 104966 / NBRC 100827 / IM2).